Consider the following 320-residue polypeptide: tRNA dimethylallyltransferase (320 aa).

An ATP-binding site is contributed by 10–17 (GPTASGKT). 12 to 17 (TASGKT) is a substrate binding site. 3 interaction with substrate tRNA regions span residues 35 to 38 (DSAL), 159 to 163 (QRIQR), and 241 to 246 (RCVGYR).

This sequence belongs to the IPP transferase family. Monomer. Mg(2+) serves as cofactor.

The catalysed reaction is adenosine(37) in tRNA + dimethylallyl diphosphate = N(6)-dimethylallyladenosine(37) in tRNA + diphosphate. Its function is as follows. Catalyzes the transfer of a dimethylallyl group onto the adenine at position 37 in tRNAs that read codons beginning with uridine, leading to the formation of N6-(dimethylallyl)adenosine (i(6)A). In Aromatoleum aromaticum (strain DSM 19018 / LMG 30748 / EbN1) (Azoarcus sp. (strain EbN1)), this protein is tRNA dimethylallyltransferase.